Here is a 187-residue protein sequence, read N- to C-terminus: dCTP deaminase (187 aa).

Residues 110 to 115 (KSTYAR), 134 to 136 (TLE), Gln-155, Tyr-169, and Gln-179 each bind dCTP. The active-site Proton donor/acceptor is the Glu-136.

Belongs to the dCTP deaminase family. In terms of assembly, homotrimer.

It carries out the reaction dCTP + H2O + H(+) = dUTP + NH4(+). Its pathway is pyrimidine metabolism; dUMP biosynthesis; dUMP from dCTP (dUTP route): step 1/2. Catalyzes the deamination of dCTP to dUTP. This Bordetella bronchiseptica (strain ATCC BAA-588 / NCTC 13252 / RB50) (Alcaligenes bronchisepticus) protein is dCTP deaminase.